Consider the following 217-residue polypeptide: Cytidylate kinase (217 aa).

9–17 (GPSSSGKSS) contributes to the ATP binding site.

Belongs to the cytidylate kinase family. Type 1 subfamily.

Its subcellular location is the cytoplasm. It carries out the reaction CMP + ATP = CDP + ADP. It catalyses the reaction dCMP + ATP = dCDP + ADP. This is Cytidylate kinase from Mycoplasma genitalium (strain ATCC 33530 / DSM 19775 / NCTC 10195 / G37) (Mycoplasmoides genitalium).